We begin with the raw amino-acid sequence, 337 residues long: Ribosomal RNA small subunit methyltransferase H (337 aa).

Residues A33–H35, D53, D101, and Q108 each bind S-adenosyl-L-methionine.

This sequence belongs to the methyltransferase superfamily. RsmH family.

The protein localises to the cytoplasm. The enzyme catalyses cytidine(1402) in 16S rRNA + S-adenosyl-L-methionine = N(4)-methylcytidine(1402) in 16S rRNA + S-adenosyl-L-homocysteine + H(+). Specifically methylates the N4 position of cytidine in position 1402 (C1402) of 16S rRNA. This chain is Ribosomal RNA small subunit methyltransferase H, found in Herpetosiphon aurantiacus (strain ATCC 23779 / DSM 785 / 114-95).